The primary structure comprises 477 residues: Ribulose bisphosphate carboxylase large chain (477 aa).

Positions 1–2 (MS) are excised as a propeptide. The residue at position 3 (Pro-3) is an N-acetylproline. Position 14 is an N6,N6,N6-trimethyllysine (Lys-14). 2 residues coordinate substrate: Asn-123 and Thr-173. Lys-175 acts as the Proton acceptor in catalysis. Lys-177 provides a ligand contact to substrate. Mg(2+)-binding residues include Lys-201, Asp-203, and Glu-204. An N6-carboxylysine modification is found at Lys-201. Catalysis depends on His-294, which acts as the Proton acceptor. Residues Arg-295, His-327, and Ser-379 each contribute to the substrate site.

It belongs to the RuBisCO large chain family. Type I subfamily. In terms of assembly, heterohexadecamer of 8 large chains and 8 small chains; disulfide-linked. The disulfide link is formed within the large subunit homodimers. The cofactor is Mg(2+). In terms of processing, the disulfide bond which can form in the large chain dimeric partners within the hexadecamer appears to be associated with oxidative stress and protein turnover.

It is found in the plastid. It localises to the chloroplast. The enzyme catalyses 2 (2R)-3-phosphoglycerate + 2 H(+) = D-ribulose 1,5-bisphosphate + CO2 + H2O. The catalysed reaction is D-ribulose 1,5-bisphosphate + O2 = 2-phosphoglycolate + (2R)-3-phosphoglycerate + 2 H(+). Functionally, ruBisCO catalyzes two reactions: the carboxylation of D-ribulose 1,5-bisphosphate, the primary event in carbon dioxide fixation, as well as the oxidative fragmentation of the pentose substrate in the photorespiration process. Both reactions occur simultaneously and in competition at the same active site. The protein is Ribulose bisphosphate carboxylase large chain (rbcL) of Solanum lycopersicum (Tomato).